Here is a 256-residue protein sequence, read N- to C-terminus: Imidazole glycerol phosphate synthase subunit HisF (256 aa).

Active-site residues include D11 and D130.

This sequence belongs to the HisA/HisF family. In terms of assembly, heterodimer of HisH and HisF.

It localises to the cytoplasm. It carries out the reaction 5-[(5-phospho-1-deoxy-D-ribulos-1-ylimino)methylamino]-1-(5-phospho-beta-D-ribosyl)imidazole-4-carboxamide + L-glutamine = D-erythro-1-(imidazol-4-yl)glycerol 3-phosphate + 5-amino-1-(5-phospho-beta-D-ribosyl)imidazole-4-carboxamide + L-glutamate + H(+). It functions in the pathway amino-acid biosynthesis; L-histidine biosynthesis; L-histidine from 5-phospho-alpha-D-ribose 1-diphosphate: step 5/9. Its function is as follows. IGPS catalyzes the conversion of PRFAR and glutamine to IGP, AICAR and glutamate. The HisF subunit catalyzes the cyclization activity that produces IGP and AICAR from PRFAR using the ammonia provided by the HisH subunit. In Cupriavidus metallidurans (strain ATCC 43123 / DSM 2839 / NBRC 102507 / CH34) (Ralstonia metallidurans), this protein is Imidazole glycerol phosphate synthase subunit HisF.